A 275-amino-acid chain; its full sequence is Formamidopyrimidine-DNA glycosylase (275 aa).

Pro2 functions as the Schiff-base intermediate with DNA in the catalytic mechanism. Residue Glu3 is the Proton donor of the active site. The active-site Proton donor; for beta-elimination activity is the Lys58. 3 residues coordinate DNA: His91, Arg109, and Arg154. The segment at 240–274 adopts an FPG-type zinc-finger fold; that stretch reads AVYERAGLPCRVCGAPIRRLVQGQRATYFCPSCQK. Arg264 functions as the Proton donor; for delta-elimination activity in the catalytic mechanism.

Belongs to the FPG family. Monomer. It depends on Zn(2+) as a cofactor.

It carries out the reaction Hydrolysis of DNA containing ring-opened 7-methylguanine residues, releasing 2,6-diamino-4-hydroxy-5-(N-methyl)formamidopyrimidine.. The catalysed reaction is 2'-deoxyribonucleotide-(2'-deoxyribose 5'-phosphate)-2'-deoxyribonucleotide-DNA = a 3'-end 2'-deoxyribonucleotide-(2,3-dehydro-2,3-deoxyribose 5'-phosphate)-DNA + a 5'-end 5'-phospho-2'-deoxyribonucleoside-DNA + H(+). Its function is as follows. Involved in base excision repair of DNA damaged by oxidation or by mutagenic agents. Acts as a DNA glycosylase that recognizes and removes damaged bases. Has a preference for oxidized purines, such as 7,8-dihydro-8-oxoguanine (8-oxoG). Has AP (apurinic/apyrimidinic) lyase activity and introduces nicks in the DNA strand. Cleaves the DNA backbone by beta-delta elimination to generate a single-strand break at the site of the removed base with both 3'- and 5'-phosphates. The polypeptide is Formamidopyrimidine-DNA glycosylase (Bordetella parapertussis (strain 12822 / ATCC BAA-587 / NCTC 13253)).